The following is a 141-amino-acid chain: Protein wingless (141 aa).

S3 carries O-palmitoleoyl serine; by PORCN lipidation. A compositionally biased stretch (polar residues) spans 40-49 (TDLEAPTQRN). A disordered region spans residues 40-61 (TDLEAPTQRNDAAPHRAPRRER). Cysteines 107 and 122 form a disulfide. 2 N-linked (GlcNAc...) asparagine glycosylation sites follow: N108 and N138.

This sequence belongs to the Wnt family. Post-translationally, palmitoleoylated by porcupine. The lipid group functions as a sorting signal, targeting the ligand to polarized vesicles that transport wg to unique sites at the cell surface. Depalmitoleoylated by notum, leading to inhibit Wnt signaling pathway.

The protein resides in the secreted. Its subcellular location is the extracellular space. It is found in the extracellular matrix. Segment polarity protein. Binds to the frizzled seven-transmembrane receptors. This protein is probably a growth factor. This chain is Protein wingless (WG), found in Manduca sexta (Tobacco hawkmoth).